A 317-amino-acid chain; its full sequence is Methionyl-tRNA formyltransferase (317 aa).

112 to 115 (SLLP) is a binding site for (6S)-5,6,7,8-tetrahydrofolate.

The protein belongs to the Fmt family.

The catalysed reaction is L-methionyl-tRNA(fMet) + (6R)-10-formyltetrahydrofolate = N-formyl-L-methionyl-tRNA(fMet) + (6S)-5,6,7,8-tetrahydrofolate + H(+). Its function is as follows. Attaches a formyl group to the free amino group of methionyl-tRNA(fMet). The formyl group appears to play a dual role in the initiator identity of N-formylmethionyl-tRNA by promoting its recognition by IF2 and preventing the misappropriation of this tRNA by the elongation apparatus. The sequence is that of Methionyl-tRNA formyltransferase from Geobacter sulfurreducens (strain ATCC 51573 / DSM 12127 / PCA).